Here is a 298-residue protein sequence, read N- to C-terminus: uncharacterized protein (298 aa).

Asp119 is an active-site residue.

The protein belongs to the pseudouridine synthase RluA family.

The enzyme catalyses a uridine in RNA = a pseudouridine in RNA. This is an uncharacterized protein from Helicobacter pylori (strain ATCC 700392 / 26695) (Campylobacter pylori).